The sequence spans 326 residues: Pyruvate dehydrogenase E1 component subunit alpha (326 aa).

Heterodimer of an alpha and a beta chain. Thiamine diphosphate serves as cofactor.

It carries out the reaction N(6)-[(R)-lipoyl]-L-lysyl-[protein] + pyruvate + H(+) = N(6)-[(R)-S(8)-acetyldihydrolipoyl]-L-lysyl-[protein] + CO2. Functionally, the pyruvate dehydrogenase complex catalyzes the overall conversion of pyruvate to acetyl-CoA and CO(2). It contains multiple copies of three enzymatic components: pyruvate dehydrogenase (E1), dihydrolipoamide acetyltransferase (E2) and lipoamide dehydrogenase (E3). The sequence is that of Pyruvate dehydrogenase E1 component subunit alpha (pdhA) from Rickettsia conorii (strain ATCC VR-613 / Malish 7).